The sequence spans 176 residues: MSVEETGWVTVALVGKTRGNRGEVTAVVLSSRPERYQDLQEVFLFGPGLPEAGERREVEEAWYHLQTLVLKFRGVDTISEAESLYGAEVRIPASQRISLDEGEYFESDLIGCEVVDRQSGQSLGKVSAWDDGGGSGLLVVGDLLIPFARAICVEINPAAKRITVELPEGLKDLNRP.

Residues 101–170 form the PRC barrel domain; that stretch reads EGEYFESDLI…RITVELPEGL (70 aa).

The protein belongs to the RimM family. Binds ribosomal protein uS19.

Its subcellular location is the cytoplasm. Its function is as follows. An accessory protein needed during the final step in the assembly of 30S ribosomal subunit, possibly for assembly of the head region. Essential for efficient processing of 16S rRNA. May be needed both before and after RbfA during the maturation of 16S rRNA. It has affinity for free ribosomal 30S subunits but not for 70S ribosomes. This is Ribosome maturation factor RimM from Solibacter usitatus (strain Ellin6076).